The following is a 144-amino-acid chain: Large ribosomal subunit protein uL15 (144 aa).

The interval 1-52 is disordered; the sequence is MYLNTISPMKKSNHSSKRKGRGIGSGKGKTSGRGHKGQRSRSGGKVRRGFEG. Composition is skewed to basic residues over residues 11–21 and 30–47; these read KSNHSSKRKGR and TSGR…GKVR.

This sequence belongs to the universal ribosomal protein uL15 family. In terms of assembly, part of the 50S ribosomal subunit.

Binds to the 23S rRNA. The polypeptide is Large ribosomal subunit protein uL15 (Wigglesworthia glossinidia brevipalpis).